The following is a 488-amino-acid chain: Patatin-like protein 7 (488 aa).

The segment at 23 to 49 is disordered; that stretch reads QRGGDGATAASKSANDYNNNDSLLTDM. The span at 32–47 shows a compositional bias: polar residues; that stretch reads ASKSANDYNNNDSLLT. Residues 101 to 301 enclose the PNPLA domain; the sequence is LSIDGGGMRG…AMSNPTAAAI (201 aa). The short motif at 105 to 110 is the GXGXXG element; that stretch reads GGGMRG. S145 acts as the Nucleophile in catalysis.

The protein belongs to the patatin family. As to expression, highly expressed in roots and at lower levels in leaves, stems, flowers and siliques.

It is found in the cell membrane. Its function is as follows. Possesses non-specific lipolytic acyl hydrolase (LAH) activity. Catalyzes the hydrolysis of the galactolipids monogalactosyldiacylglycerol (MGDG) and digalactosyldiacylglycerol (DGDG), and the phoshpolipids phosphatidylcholine (PC), phosphatidylethanolamine (PE), phosphatidylglycerol (PG), phosphatidic acid (PA), phosphatidylserine (PS). Favors the release of fatty acid at the sn-2 position for PC. Possesses acyl-CoA thioesterase activity. Negatively affects disease resistance to the necrotic fungal pathogen Botrytis cinerea and the avirulent bacteria Pseudomonas syringae by promoting cell death and reducing the efficiency of the hypersensitive response, respectively. However, PLP2 contributes to resistance to cucumber mosaic virus (CMV), an obligate parasite inducing hypersensitive response. May negatively regulate oxylipin production, possibly via participating in membrane repair that includes removal of oxidatively modified lipids. Enzymatic products of PLP2 may influence cellulose content and cell elongation. The sequence is that of Patatin-like protein 7 (PLP7) from Arabidopsis thaliana (Mouse-ear cress).